The primary structure comprises 363 residues: tRNA N6-adenosine threonylcarbamoyltransferase (363 aa).

2 residues coordinate Fe cation: His-127 and His-131. Substrate contacts are provided by residues 150–154 (LISGG), Asp-183, Gly-196, and Asn-290. Asp-318 is a Fe cation binding site.

This sequence belongs to the KAE1 / TsaD family. It depends on Fe(2+) as a cofactor.

The protein localises to the cytoplasm. It catalyses the reaction L-threonylcarbamoyladenylate + adenosine(37) in tRNA = N(6)-L-threonylcarbamoyladenosine(37) in tRNA + AMP + H(+). Functionally, required for the formation of a threonylcarbamoyl group on adenosine at position 37 (t(6)A37) in tRNAs that read codons beginning with adenine. Is involved in the transfer of the threonylcarbamoyl moiety of threonylcarbamoyl-AMP (TC-AMP) to the N6 group of A37, together with TsaE and TsaB. TsaD likely plays a direct catalytic role in this reaction. The protein is tRNA N6-adenosine threonylcarbamoyltransferase of Zymomonas mobilis subsp. mobilis (strain ATCC 31821 / ZM4 / CP4).